The sequence spans 764 residues: MKLSINDLNVFVNTPKDIAKLCEDLSRLGLEVESCIPCIAPKNVVVGKILEKAPHKNAEKLSVCQVDVGKEVLQIVCGAKNVAPNQFVPVALNGALIGSTTIAKTELRGVESHGMICSSIELGFPKINDGILELDESVGELVLGKELNEYAPFNTHVLEISLTPNRGDCLSVLGIAREISAFYHTPLKPIKALNFTPKSGLITLSAGENIESHLAYYLICNHSLKTPLNIKLSLAHNNALSENDLNNFIEFSTHFSGVIMNAYSLNTTPMDLSVKNDENNLESVYINHQKRSTIAIKHQVQKDLSECLLLEASYTDPISLSLKLHALKDKTLQKDNALIYRSARGSNPNLSDGLNFLSAHLKATILESKQTEHSLKDRTLTFQLEDITEILGLAVEKEKIQGILKNLGFKVSVKEPNSKPQILEVIAPNFRHDIKTIQDIAEEILRFVGIDNLVSKPLHCVSSKNSNPNYDTHRFFENLKHKALACGFKEVIHYVFYSKEKQQKLGFEVLEDPLELQNPITTELNTLRTSLVCGLLDASLRNKNLGFKSIALYEKGSVYNSKREEIQKLGFLISGLQKKESYPDTKGKAWDFYSFAECVSKVIGDFSLEKLTTQTPINHPYQSAKIIQNHEIIGVIAKIHPKVIQELDLFESYYAEIDAFKLKRPAMLLKPFSIYPSSVRDLTLIIDENTAFSGIKKALKDAQIPNLSEILPLDIFKESNNSIALSVRCVIHSLEKTLNDEEVNSAVQKALEILEKEFNARLKG.

The 111-residue stretch at 38–148 (CIAPKNVVVG…GELVLGKELN (111 aa)) folds into the tRNA-binding domain. The B5 domain maps to 375 to 455 (LKDRTLTFQL…RFVGIDNLVS (81 aa)). Residues Asp433, Asp439, Glu442, and Glu443 each coordinate Mg(2+). The FDX-ACB domain occupies 673–763 (SIYPSSVRDL…LEKEFNARLK (91 aa)).

It belongs to the phenylalanyl-tRNA synthetase beta subunit family. Type 1 subfamily. Tetramer of two alpha and two beta subunits. It depends on Mg(2+) as a cofactor.

The protein resides in the cytoplasm. The enzyme catalyses tRNA(Phe) + L-phenylalanine + ATP = L-phenylalanyl-tRNA(Phe) + AMP + diphosphate + H(+). In Helicobacter pylori (strain ATCC 700392 / 26695) (Campylobacter pylori), this protein is Phenylalanine--tRNA ligase beta subunit (pheT).